A 347-amino-acid polypeptide reads, in one-letter code: N-acetyl-gamma-glutamyl-phosphate reductase (347 aa).

Cys-152 is an active-site residue.

This sequence belongs to the NAGSA dehydrogenase family. Type 1 subfamily.

The protein localises to the cytoplasm. The enzyme catalyses N-acetyl-L-glutamate 5-semialdehyde + phosphate + NADP(+) = N-acetyl-L-glutamyl 5-phosphate + NADPH + H(+). It functions in the pathway amino-acid biosynthesis; L-arginine biosynthesis; N(2)-acetyl-L-ornithine from L-glutamate: step 3/4. In terms of biological role, catalyzes the NADPH-dependent reduction of N-acetyl-5-glutamyl phosphate to yield N-acetyl-L-glutamate 5-semialdehyde. This is N-acetyl-gamma-glutamyl-phosphate reductase from Neisseria gonorrhoeae (strain NCCP11945).